Consider the following 187-residue polypeptide: Elongation factor P (187 aa).

Belongs to the elongation factor P family.

It is found in the cytoplasm. The protein operates within protein biosynthesis; polypeptide chain elongation. Its function is as follows. Involved in peptide bond synthesis. Stimulates efficient translation and peptide-bond synthesis on native or reconstituted 70S ribosomes in vitro. Probably functions indirectly by altering the affinity of the ribosome for aminoacyl-tRNA, thus increasing their reactivity as acceptors for peptidyl transferase. This Desulforapulum autotrophicum (strain ATCC 43914 / DSM 3382 / VKM B-1955 / HRM2) (Desulfobacterium autotrophicum) protein is Elongation factor P.